A 260-amino-acid chain; its full sequence is Universal stress protein PHOS34 (260 aa).

Residues 1 to 33 constitute a chloroplast transit peptide; it reads MNPDSDYPHLPNIKIHHPSSPRHSHHHSSSTPS. The interval 1 to 42 is disordered; the sequence is MNPDSDYPHLPNIKIHHPSSPRHSHHHSSSTPSAATPTPTAG. The span at 14-28 shows a compositional bias: basic residues; sequence KIHHPSSPRHSHHHS. Pro18 contacts ATP. At Ser20 the chain carries Phosphoserine; by MAPK3 and MAPK6. A compositionally biased stretch (low complexity) spans 29 to 41; it reads SSTPSAATPTPTA. Residue Val80 coordinates ATP. The segment at 92–118 is disordered; it reads GPLPLQTPPPPSAATDPGAQPKPSQED. ATP-binding positions include 170–179 and 187–189; these read GSRGFGAEKR and SVS. The tract at residues 209-260 is disordered; sequence RDGPAPPGNVGATREAIVTVKSRRDDDDDDDEDHEAKIAAAASDHHEHIKDE. Ser230 carries the post-translational modification Phosphoserine. The segment covering 251–260 has biased composition (basic and acidic residues); the sequence is SDHHEHIKDE.

Belongs to the universal stress protein A family. In terms of processing, phosphorylated by MAPK3 and MAPK6 after pathogenic elicitation (e.g. bacterial flg22, Phytophthora infestans zoospores and xylanase).

The protein resides in the plastid. It is found in the chloroplast. The chain is Universal stress protein PHOS34 from Arabidopsis thaliana (Mouse-ear cress).